The primary structure comprises 88 residues: Small ribosomal subunit protein uS15c (88 aa).

Belongs to the universal ribosomal protein uS15 family. In terms of assembly, part of the 30S ribosomal subunit.

Its subcellular location is the plastid. It localises to the chloroplast. This is Small ribosomal subunit protein uS15c (rps15) from Angiopteris evecta (Mule's foot fern).